The chain runs to 365 residues: Histidinol-phosphate aminotransferase (365 aa).

Residue lysine 227 is modified to N6-(pyridoxal phosphate)lysine.

The protein belongs to the class-II pyridoxal-phosphate-dependent aminotransferase family. Histidinol-phosphate aminotransferase subfamily. In terms of assembly, homodimer. Pyridoxal 5'-phosphate serves as cofactor.

The catalysed reaction is L-histidinol phosphate + 2-oxoglutarate = 3-(imidazol-4-yl)-2-oxopropyl phosphate + L-glutamate. The protein operates within amino-acid biosynthesis; L-histidine biosynthesis; L-histidine from 5-phospho-alpha-D-ribose 1-diphosphate: step 7/9. In Campylobacter concisus (strain 13826), this protein is Histidinol-phosphate aminotransferase.